A 324-amino-acid polypeptide reads, in one-letter code: CIMIP2 protein GA14893 (324 aa).

The protein belongs to the CIMIP2 family.

The protein localises to the cytoplasm. It is found in the cytoskeleton. Its subcellular location is the cilium axoneme. Its function is as follows. Probable microtubule inner protein (MIP) part of the dynein-decorated doublet microtubules (DMTs) in cilium axoneme. This is CIMIP2 protein GA14893 from Drosophila pseudoobscura pseudoobscura (Fruit fly).